Consider the following 406-residue polypeptide: Riboflavin biosynthesis protein RibBA (406 aa).

The segment at 1–209 (MSEREEFKFN…IADLIKYRLR (209 aa)) is DHBP synthase. Residues 33 to 34 (RE), D38, 148 to 152 (RAGHT), and E172 contribute to the D-ribulose 5-phosphate site. Residue E34 coordinates Mg(2+). Residue H151 participates in Mg(2+) binding. Positions 210-406 (RETLVEKVAS…VKKDKLGHMF (197 aa)) are GTP cyclohydrolase II. A GTP-binding site is contributed by 260-264 (RVHSE). 3 residues coordinate Zn(2+): C265, C276, and C278. GTP-binding positions include Q281, 304-306 (EGR), and T326. D338 acts as the Proton acceptor; for GTP cyclohydrolase activity in catalysis. The active-site Nucleophile; for GTP cyclohydrolase activity is the R340. Positions 361 and 366 each coordinate GTP.

The protein in the N-terminal section; belongs to the DHBP synthase family. In the C-terminal section; belongs to the GTP cyclohydrolase II family. Requires Mg(2+) as cofactor. Mn(2+) is required as a cofactor. Zn(2+) serves as cofactor.

It carries out the reaction D-ribulose 5-phosphate = (2S)-2-hydroxy-3-oxobutyl phosphate + formate + H(+). The catalysed reaction is GTP + 4 H2O = 2,5-diamino-6-hydroxy-4-(5-phosphoribosylamino)-pyrimidine + formate + 2 phosphate + 3 H(+). It functions in the pathway cofactor biosynthesis; riboflavin biosynthesis; 2-hydroxy-3-oxobutyl phosphate from D-ribulose 5-phosphate: step 1/1. It participates in cofactor biosynthesis; riboflavin biosynthesis; 5-amino-6-(D-ribitylamino)uracil from GTP: step 1/4. Catalyzes the conversion of D-ribulose 5-phosphate to formate and 3,4-dihydroxy-2-butanone 4-phosphate. Functionally, catalyzes the conversion of GTP to 2,5-diamino-6-ribosylamino-4(3H)-pyrimidinone 5'-phosphate (DARP), formate and pyrophosphate. This is Riboflavin biosynthesis protein RibBA from Aquifex aeolicus (strain VF5).